Consider the following 201-residue polypeptide: Beta-lactamase inhibitory protein (201 aa).

A signal peptide spans Met1–Ala36. 2 tandem repeats follow at residues Ala37–Leu112 and Ala116–Val201. Cystine bridges form between Cys66–Cys78 and Cys145–Cys167.

In terms of assembly, interacts with E.coli beta-lactamase TEM-1; interaction inhibits hydrolysis of beta-lactam antibiotics. Interacts with K.pneumoniae beta-lactamase SHV-1. Interacts with K.pneumoniae beta-lactamases KPC-2 and KPC-3; interaction inhibits hydrolysis of beta-lactam antibiotics. Interacts with E.coli beta-lactamases CTX-M-14 and CTX-M-15; interaction inhibits hydrolysis of beta-lactam antibiotics.

The protein resides in the secreted. Functionally, inhibits a wide variety of beta lactamases. The sequence is that of Beta-lactamase inhibitory protein from Streptomyces clavuligerus.